Reading from the N-terminus, the 152-residue chain is MSEKYVVTWDMLQIHARKLASRLMPSEQWKGIIAVSRGGLVPGALLARELGIRHVDTVCISSYDHDNQRELKVLKRAEGDGEGFIVIDDLVDTGGTAVAIREMYPKAHFVTIFAKPAGRPLVDDYVIDIPQNTWIEQPWDMGVVFVPPISGR.

Residues 37–38 (RG), R69, and 88–96 (DDLVDTGGT) each bind 5-phospho-alpha-D-ribose 1-diphosphate. R69 lines the GMP pocket. A Mg(2+)-binding site is contributed by D89. D92 and I135 together coordinate guanine. Xanthine-binding residues include D92 and I135. Residues 92-96 (DTGGT) and 134-135 (WI) each bind GMP.

Belongs to the purine/pyrimidine phosphoribosyltransferase family. XGPT subfamily. In terms of assembly, homotetramer. It depends on Mg(2+) as a cofactor.

The protein resides in the cell inner membrane. The catalysed reaction is GMP + diphosphate = guanine + 5-phospho-alpha-D-ribose 1-diphosphate. It catalyses the reaction XMP + diphosphate = xanthine + 5-phospho-alpha-D-ribose 1-diphosphate. The enzyme catalyses IMP + diphosphate = hypoxanthine + 5-phospho-alpha-D-ribose 1-diphosphate. Its pathway is purine metabolism; GMP biosynthesis via salvage pathway; GMP from guanine: step 1/1. The protein operates within purine metabolism; XMP biosynthesis via salvage pathway; XMP from xanthine: step 1/1. Functionally, purine salvage pathway enzyme that catalyzes the transfer of the ribosyl-5-phosphate group from 5-phospho-alpha-D-ribose 1-diphosphate (PRPP) to the N9 position of the 6-oxopurines guanine and xanthine to form the corresponding ribonucleotides GMP (guanosine 5'-monophosphate) and XMP (xanthosine 5'-monophosphate), with the release of PPi. To a lesser extent, also acts on hypoxanthine. The protein is Xanthine-guanine phosphoribosyltransferase of Salmonella choleraesuis (strain SC-B67).